The following is a 238-amino-acid chain: Dolichyldiphosphatase 1 (238 aa).

The next 4 membrane-spanning stretches (helical) occupy residues 33-53 (LAYL…LIIF), 100-120 (PSSH…FLYL), 130-150 (FLDL…AFLV), and 162-182 (WSQV…WFIF).

This sequence belongs to the dolichyldiphosphatase family.

The protein localises to the endoplasmic reticulum membrane. It carries out the reaction a di-trans,poly-cis-dolichyl diphosphate + H2O = a di-trans,poly-cis-dolichyl phosphate + phosphate + H(+). It participates in protein modification; protein glycosylation. Functionally, required for efficient N-glycosylation. Necessary for maintaining optimal levels of dolichol-linked oligosaccharides. Hydrolyzes dolichyl pyrophosphate at a very high rate and dolichyl monophosphate at a much lower rate. Does not act on phosphatidate. The sequence is that of Dolichyldiphosphatase 1 (DOLPP1) from Callithrix jacchus (White-tufted-ear marmoset).